A 124-amino-acid polypeptide reads, in one-letter code: Small ribosomal subunit protein uS12 (124 aa).

The interval 1-23 (MATINQLVRKPRVRQKQKSNVPA) is disordered. D89 carries the post-translational modification 3-methylthioaspartic acid. Residues 103 to 124 (DTAGVGDRRQGRSKYGAKRPKG) are disordered. Positions 113-124 (GRSKYGAKRPKG) are enriched in basic residues.

The protein belongs to the universal ribosomal protein uS12 family. In terms of assembly, part of the 30S ribosomal subunit. Contacts proteins S8 and S17. May interact with IF1 in the 30S initiation complex.

With S4 and S5 plays an important role in translational accuracy. Its function is as follows. Interacts with and stabilizes bases of the 16S rRNA that are involved in tRNA selection in the A site and with the mRNA backbone. Located at the interface of the 30S and 50S subunits, it traverses the body of the 30S subunit contacting proteins on the other side and probably holding the rRNA structure together. The combined cluster of proteins S8, S12 and S17 appears to hold together the shoulder and platform of the 30S subunit. This chain is Small ribosomal subunit protein uS12, found in Nitrosococcus oceani (strain ATCC 19707 / BCRC 17464 / JCM 30415 / NCIMB 11848 / C-107).